The primary structure comprises 356 residues: Phenylalanine dehydrogenase (356 aa).

Arg-43 serves as a coordination point for NAD(+). Lys-67 lines the L-phenylalanine pocket. The active-site Proton donor/acceptor is Lys-79. L-phenylalanine is bound at residue 118-119 (PD). NAD(+)-binding positions include Asp-119, Ser-150, Thr-154, 183 to 189 (GLGAVGG), 206 to 207 (DT), Arg-211, 240 to 241 (AM), and 261 to 263 (AAN). Asn-263 contacts L-phenylalanine.

The protein belongs to the Glu/Leu/Phe/Val dehydrogenases family. In terms of assembly, homotetramer, dimer of dimers.

The enzyme catalyses L-phenylalanine + NAD(+) + H2O = 3-phenylpyruvate + NH4(+) + NADH + H(+). It participates in amino-acid biosynthesis; L-phenylalanine biosynthesis; L-phenylalanine from phenylpyruvate (PDH route): step 1/1. Its activity is regulated as follows. Subject to competitive inhibition by 3-phenylpropionate for the conversion of L-phenylalanine to phenylpyruvate. Subject to competitive inhibition by D-phenylalanine for the conversion of phenylpyruvate to L-phenylalanine. Catalyzes the reversible NAD(+)-dependent oxidative deamination of L-phenylalanine to phenylpyruvate. The sequence is that of Phenylalanine dehydrogenase from Rhodococcus sp.